A 243-amino-acid polypeptide reads, in one-letter code: R-spondin-2 (243 aa).

A signal peptide spans 1–21 (MQFQLFSFALIILNCVDYSHC). 11 disulfide bridges follow: Cys40–Cys46, Cys43–Cys52, Cys55–Cys74, Cys78–Cys93, Cys96–Cys104, Cys101–Cys110, Cys113–Cys124, Cys128–Cys141, Cys145–Cys187, Cys156–Cys163, and Cys196–Cys203. One copy of the FU repeat lies at 90-134 (MNRCSRCRIENCDSCFSRDFCIKCKSGFYSLKGQCFEECPEGFAP). Positions 144–204 (GCEVGPWSEW…RCKMAIRHCP (61 aa)) constitute a TSP type-1 domain. Asn160 is a glycosylation site (N-linked (GlcNAc...) asparagine). Basic residues predominate over residues 204 to 224 (PGGKRTTKKKDKRNKKKKKKL). Residues 204–243 (PGGKRTTKKKDKRNKKKKKKLLERAQEQHSVVLATDRSSQ) are disordered.

It belongs to the R-spondin family. Binds heparin.

The protein resides in the secreted. In terms of biological role, activator of the canonical Wnt signaling pathway by acting as a ligand for lgr4-6 receptors. Upon binding to lgr4-6 (lgr4, lgr5 or lgr6), lgr4-6 associate with phosphorylated lrp6 and frizzled receptors that are activated by extracellular Wnt receptors, triggering the canonical Wnt signaling pathway to increase expression of target genes. Acts both in the canonical Wnt/beta-catenin-dependent pathway and in non-canonical Wnt signaling pathway. Activates neural markers and promotes muscle formation. Overexpression blocks activin, nodal and BMP4 signaling, suggesting that it may negatively regulate the TGF-beta pathway. During embryonic development, plays a crucial role in limb specification, amplifying the Wnt signaling pathway independently of LGR4-6 receptors, possibly by acting as a direct antagonistic ligand to RNF43 and ZNRF3, hence governing the number of limbs an embryo should form. The polypeptide is R-spondin-2 (rspo2) (Xenopus laevis (African clawed frog)).